Consider the following 518-residue polypeptide: Arrestin-related trafficking adapter 10 (518 aa).

A Glycyl lysine isopeptide (Lys-Gly) (interchain with G-Cter in ubiquitin) cross-link involves residue K118.

This sequence belongs to the ART10 family. Interacts with RSP5. Ubiquitinated by RSP5.

It localises to the cytoplasm. In terms of biological role, may regulate endocytosis by recruiting RSP5 ubiquitin ligase activity to specific plasma membrane proteins in response to extracellular stimuli. In Saccharomyces cerevisiae (strain Lalvin EC1118 / Prise de mousse) (Baker's yeast), this protein is Arrestin-related trafficking adapter 10 (ART10).